We begin with the raw amino-acid sequence, 421 residues long: UDP-N-acetylglucosamine 1-carboxyvinyltransferase 1 (421 aa).

22–23 is a phosphoenolpyruvate binding site; that stretch reads KN. Arg95 is a UDP-N-acetyl-alpha-D-glucosamine binding site. The Proton donor role is filled by Cys119. 2-(S-cysteinyl)pyruvic acid O-phosphothioketal is present on Cys119. Residues 124 to 128, Asp308, and Val330 each bind UDP-N-acetyl-alpha-D-glucosamine; that span reads RPIEQ.

The protein belongs to the EPSP synthase family. MurA subfamily.

It is found in the cytoplasm. The enzyme catalyses phosphoenolpyruvate + UDP-N-acetyl-alpha-D-glucosamine = UDP-N-acetyl-3-O-(1-carboxyvinyl)-alpha-D-glucosamine + phosphate. It participates in cell wall biogenesis; peptidoglycan biosynthesis. Cell wall formation. Adds enolpyruvyl to UDP-N-acetylglucosamine. This chain is UDP-N-acetylglucosamine 1-carboxyvinyltransferase 1, found in Staphylococcus aureus (strain MW2).